An 858-amino-acid chain; its full sequence is DNA mismatch repair protein MutS (858 aa).

600–607 (GPNMSGKS) is an ATP binding site.

This sequence belongs to the DNA mismatch repair MutS family.

Its function is as follows. This protein is involved in the repair of mismatches in DNA. It is possible that it carries out the mismatch recognition step. This protein has a weak ATPase activity. The polypeptide is DNA mismatch repair protein MutS (Bacillus pumilus (strain SAFR-032)).